We begin with the raw amino-acid sequence, 229 residues long: Aspartate-rich protein 1 (229 aa).

The disordered stretch occupies residues 84–106 (SEEDNDDAKILPSPVQGSSEDNL).

This is Aspartate-rich protein 1 (DRICH1) from Homo sapiens (Human).